Reading from the N-terminus, the 190-residue chain is Xanthine phosphoribosyltransferase (190 aa).

Xanthine-binding residues include leucine 20 and asparagine 27. A 5-phospho-alpha-D-ribose 1-diphosphate-binding site is contributed by 128 to 132; sequence ANGNA. Lysine 156 is a xanthine binding site.

The protein belongs to the purine/pyrimidine phosphoribosyltransferase family. Xpt subfamily. Homodimer.

It is found in the cytoplasm. The catalysed reaction is XMP + diphosphate = xanthine + 5-phospho-alpha-D-ribose 1-diphosphate. It participates in purine metabolism; XMP biosynthesis via salvage pathway; XMP from xanthine: step 1/1. In terms of biological role, converts the preformed base xanthine, a product of nucleic acid breakdown, to xanthosine 5'-monophosphate (XMP), so it can be reused for RNA or DNA synthesis. In Clostridium novyi (strain NT), this protein is Xanthine phosphoribosyltransferase.